The primary structure comprises 581 residues: MAVAGGPAGKGRDISLAALRRHDPYISRIVDVASQVALYTFGHRANEWEKTDVEGTLFVYSRSASPKHGFTIMNRLSMENRTEPITKDLDFLLQDPFLLYRNARLSIYGIWFYDKEECQRIAELMKNLTQYEQLKAHHGTGAGASPVSLGSGEGKEADILRMLTKAKDEYTKCKTCSEPKQISSSSAIHDNPNLIKPIPVKPSGSRQQRGPRPGQTSDPEPQHLSLTALFGKQDKAPCQEATGPPQTLPLQQQQPEKFPMRQGVVRSLSYEEPRRPSPPVDKQLCPAIQKLMVRSMDLQPLAELPESRPCTDALRAACAGPAQTGSPRSHALAAPGTQKLLQVQSIPGAENRCEPGAPAPASSATTPVSLAQPTRLSSALPPQTPGPRALPRPAPPGPGPGHQPVTGPGEVSPRELLRRLQAVQQEQQLPAPGRPALAAKFPTATLSTRARNPLEPWRDPPPSTEQPAPLLQVLSPQRIPAAATPPPLMSPLVFAQPSWAPPQERSRAPLPPGNQDPAATPTGLLLPLRTPEPPGTPGSALSKLQLQEALLHLIQNDDNFLNIIYEAYLFSLTQAAVKKTL.

A Phosphoserine modification is found at S145. Disordered regions lie at residues Q181–Q222 and A236–F258. Residues G204–P219 are compositionally biased toward polar residues. Positions P244–P255 are enriched in low complexity. 2 positions are modified to phosphoserine: S269 and S326. The disordered stretch occupies residues A349–V411. A compositionally biased stretch (low complexity) spans P355–P367. T366 is modified (phosphothreonine). Residues V368 to P381 are compositionally biased toward polar residues. Residues P382–G401 are compositionally biased toward pro residues. S412 is subject to Phosphoserine. Positions Q427–A468 are disordered. Position 475 is a phosphoserine (S475). Residues S498–T522 form a disordered region.

This sequence belongs to the DCP1 family. In terms of assembly, interacts with DCP1A.

It localises to the cytoplasm. Its subcellular location is the nucleus. It catalyses the reaction a 5'-end (N(7)-methyl 5'-triphosphoguanosine)-ribonucleoside in mRNA + H2O = N(7)-methyl-GDP + a 5'-end phospho-ribonucleoside in mRNA + 2 H(+). May play a role in the degradation of mRNAs, both in normal mRNA turnover and in nonsense-mediated mRNA decay. May remove the 7-methyl guanine cap structure from mRNA molecules, yielding a 5'-phosphorylated mRNA fragment and 7m-GDP. This is mRNA-decapping enzyme 1B (DCP1B) from Bos taurus (Bovine).